The following is a 475-amino-acid chain: Capsid scaffolding protein (475 aa).

Catalysis depends on charge relay system residues histidine 45, serine 113, and histidine 132. The interaction with pAP stretch occupies residues 254 to 273 (DDLISVPKSTFLSMLQNNLD). The Nuclear localization signal signature appears at 327–333 (RPNKRKR). Residues 426-454 (QPNYAPPPTEGASNEAPKPSVQEPVHIDA) form a disordered region. An interaction with major capsid protein region spans residues 455-475 (SFAQDPVSKLQKMFCDELLNK).

The protein belongs to the herpesviridae capsid scaffolding protein family. Homomultimer. Interacts with major capsid protein. As to quaternary structure, exists in a monomer-dimer equilibrium with the dimer being the active species. Post-translationally, capsid scaffolding protein is cleaved by assemblin after formation of the spherical procapsid. As a result, the capsid obtains its mature, icosahedral shape. Cleavages occur at two or more sites: release (R-site) and maturation (M-site).

The protein localises to the host cytoplasm. It localises to the host nucleus. The catalysed reaction is Cleaves -Ala-|-Ser- and -Ala-|-Ala- bonds in the scaffold protein.. Acts as a scaffold protein by binding major capsid protein in the cytoplasm, inducing the nuclear localization of both proteins. Multimerizes in the nucleus such as major capsid protein forms the icosahedral T=16 capsid. Autocatalytic cleavage releases the assembly protein, and subsequently abolishes interaction with major capsid protein. Cleavages products are evicted from the capsid before or during DNA packaging. In terms of biological role, protease that plays an essential role in virion assembly within the nucleus. Catalyzes the cleavage of the assembly protein after formation of the spherical procapsid. By that cleavage, the capsid matures and gains its icosahedral shape. The cleavage sites seem to include -Ala-Ser-, -Ala-Ala-, as well as Ala-Thr bonds. Assemblin and cleavages products are evicted from the capsid before or during DNA packaging. Its function is as follows. Plays a major role in capsid assembly. Acts as a scaffold protein by binding major capsid protein. Multimerizes in the nucleus such as major capsid protein forms the icosahedral T=16 capsid. Cleaved by assemblin after capsid completion. The cleavages products are evicted from the capsid before or during DNA packaging. The sequence is that of Capsid scaffolding protein (17) from Saimiriine herpesvirus 2 (strain 11) (SaHV-2).